The chain runs to 308 residues: Maspardin (308 aa).

The AB hydrolase-1 domain maps to F87–M159. S304 bears the Phosphoserine mark.

This sequence belongs to the AB hydrolase superfamily. As to quaternary structure, interacts with CD4. Interacts with ALDH16A1. Expressed in cell lines FT.1 and in a L cell fibroblast derivative (at protein level).

The protein localises to the cytoplasm. In terms of biological role, may play a role as a negative regulatory factor in CD4-dependent T-cell activation. The polypeptide is Maspardin (Spg21) (Mus musculus (Mouse)).